Here is a 181-residue protein sequence, read N- to C-terminus: ATP-dependent protease subunit HslV (181 aa).

T7 is a catalytic residue. A162, C165, and T168 together coordinate Na(+).

The protein belongs to the peptidase T1B family. HslV subfamily. In terms of assembly, a double ring-shaped homohexamer of HslV is capped on each side by a ring-shaped HslU homohexamer. The assembly of the HslU/HslV complex is dependent on binding of ATP.

The protein localises to the cytoplasm. The catalysed reaction is ATP-dependent cleavage of peptide bonds with broad specificity.. Allosterically activated by HslU binding. Protease subunit of a proteasome-like degradation complex believed to be a general protein degrading machinery. The polypeptide is ATP-dependent protease subunit HslV (Coxiella burnetii (strain Dugway 5J108-111)).